The following is a 409-amino-acid chain: Cuticle-degrading serine protease (409 aa).

The N-terminal stretch at 1–21 is a signal peptide; it reads MLTNGLISLLAIAGLATNAFA. Residues 22-123 constitute a propeptide that is removed on maturation; the sequence is GPIRKVSNAG…VEQDTVVTTY (102 aa). The Inhibitor I9 domain occupies 39 to 122; sequence KYIVVLKKGL…YVEQDTVVTT (84 aa). In terms of domain architecture, Peptidase S8 spans 130–409; that stretch reads TWGLDRISHE…PNKIAYNGYA (280 aa). Residue D164 is the Charge relay system of the active site. N178 carries N-linked (GlcNAc...) asparagine glycosylation. Residue H200 is the Charge relay system of the active site. N252 is a glycosylation site (N-linked (GlcNAc...) asparagine). Residue S353 is the Charge relay system of the active site.

Belongs to the peptidase S8 family.

It is found in the secreted. Inhibited by PMSF, SSI, the peptide Phe-Val and by Phe, but not by EDTA. Its function is as follows. Hydrolyzes gelatin, casein, the chromogenic substrate azocoll and the cuticle of the nematode P.redivivus. Immobilizes P.redivivus. The chain is Cuticle-degrading serine protease from Arthrobotrys oligospora (strain ATCC 24927 / CBS 115.81 / DSM 1491) (Nematode-trapping fungus).